Here is a 132-residue protein sequence, read N- to C-terminus: Ribosome-binding factor A (132 aa).

This sequence belongs to the RbfA family. Monomer. Binds 30S ribosomal subunits, but not 50S ribosomal subunits or 70S ribosomes.

It is found in the cytoplasm. One of several proteins that assist in the late maturation steps of the functional core of the 30S ribosomal subunit. Associates with free 30S ribosomal subunits (but not with 30S subunits that are part of 70S ribosomes or polysomes). Required for efficient processing of 16S rRNA. May interact with the 5'-terminal helix region of 16S rRNA. This Xanthomonas campestris pv. campestris (strain 8004) protein is Ribosome-binding factor A.